Consider the following 358-residue polypeptide: MPAHILQEISGAYSATTTITAPPSGGQQNGGEKFEKSSHHWGADVRPELKDDLYDPTYQDDEGPPPKLEYVWRNIILMALLHLGALYGITLVPSCKLYTCLFAYLYYVISALGITAGAHRLWSHRTYKARLPLRLFLIIANTMAFQNDVYEWARDHRAHHKFSETHADPHNSRRGFFFSHVGWLLVRKHPAVKEKGGKLDMSDLKAEKLVMFQRRYYKPGLLLMCFVLPTLVPWYCWGETFVNSLCVSTFLRYAVVLNATWLVNSAAHLYGYRPYDKNISSRENILVSMGAVGEGFHNYHHAFPYDYSASEYRWHINFTTFFIDCMALLGLAYDRKRVSRAAVLARIKRTGDGSCKSG.

Topologically, residues 1 to 71 (MPAHILQEIS…EGPPPKLEYV (71 aa)) are cytoplasmic. The tract at residues 16 to 39 (TTTITAPPSGGQQNGGEKFEKSSH) is disordered. A helical membrane pass occupies residues 72 to 92 (WRNIILMALLHLGALYGITLV). Asn-74 contributes to the substrate binding site. The Lumenal segment spans residues 93 to 96 (PSCK). Residues 97-117 (LYTCLFAYLYYVISALGITAG) traverse the membrane as a helical segment. The Cytoplasmic segment spans residues 118–216 (AHRLWSHRTY…EKLVMFQRRY (99 aa)). 2 residues coordinate Fe cation: His-119 and His-124. The Histidine box-1 motif lies at 119–124 (HRLWSH). Substrate is bound by residues Asn-147, Arg-154, and Asp-155. 3 residues coordinate Fe cation: His-156, His-159, and His-160. The Histidine box-2 signature appears at 156–160 (HRAHH). Positions 187 and 188 each coordinate substrate. The chain crosses the membrane as a helical span at residues 217–236 (YKPGLLLMCFVLPTLVPWYC). Topologically, residues 237–240 (WGET) are lumenal. Residues 241 to 262 (FVNSLCVSTFLRYAVVLNATWL) traverse the membrane as a helical segment. Trp-261 is a substrate binding site. Over 263–358 (VNSAAHLYGY…RTGDGSCKSG (96 aa)) the chain is Cytoplasmic. The Fe cation site is built by His-268, His-297, His-300, and His-301. The short motif at 297–301 (HNYHH) is the Histidine box-3 element.

It belongs to the fatty acid desaturase type 1 family. It depends on Fe(2+) as a cofactor. In terms of tissue distribution, detected in brain and skin. Highly expressed in brain, and detected at low levels in heart, stomach, lung and testis. Detected both in dermis and epidermis.

It localises to the endoplasmic reticulum membrane. It is found in the microsome membrane. The enzyme catalyses octadecanoyl-CoA + 2 Fe(II)-[cytochrome b5] + O2 + 2 H(+) = (9Z)-octadecenoyl-CoA + 2 Fe(III)-[cytochrome b5] + 2 H2O. It catalyses the reaction hexadecanoyl-CoA + 2 Fe(II)-[cytochrome b5] + O2 + 2 H(+) = (9Z)-hexadecenoyl-CoA + 2 Fe(III)-[cytochrome b5] + 2 H2O. Functionally, stearoyl-CoA desaturase that utilizes O(2) and electrons from reduced cytochrome b5 to introduce the first double bond into saturated fatty acyl-CoA substrates. Catalyzes the insertion of a cis double bond at the delta-9 position into fatty acyl-CoA substrates including palmitoyl-CoA and stearoyl-CoA. Gives rise to a mixture of 16:1 and 18:1 unsaturated fatty acids. Contributes to the biosynthesis of membrane phospholipids, cholesterol esters and triglycerides, especially during embryonic development and in neonates. Important for normal permeability barrier function of the skin in neonates. This is Stearoyl-CoA desaturase 2 (Scd2) from Mus musculus (Mouse).